The primary structure comprises 171 residues: Secreted protein CSS3 (171 aa).

The first 20 residues, 1–20, serve as a signal peptide directing secretion; that stretch reads MVPLFGLFCIFSQLYSLCSA. N-linked (GlcNAc...) asparagine glycans are attached at residues asparagine 37, asparagine 139, and asparagine 159.

It is found in the cytoplasm. It localises to the secreted. This chain is Secreted protein CSS3, found in Saccharomyces cerevisiae (strain ATCC 204508 / S288c) (Baker's yeast).